Here is a 906-residue protein sequence, read N- to C-terminus: Protein translocase subunit SecA (906 aa).

ATP is bound by residues Gln-89, 107–111 (GEGKT), and Asp-502. Residues 868-887 (VPPAQRDPADPRTWGKVSRN) are disordered. 4 residues coordinate Zn(2+): Cys-890, Cys-892, Cys-901, and His-902.

This sequence belongs to the SecA family. Monomer and homodimer. Part of the essential Sec protein translocation apparatus which comprises SecA, SecYEG and auxiliary proteins SecDF-YajC and YidC. Requires Zn(2+) as cofactor.

It localises to the cell inner membrane. The protein resides in the cytoplasm. It catalyses the reaction ATP + H2O + cellular proteinSide 1 = ADP + phosphate + cellular proteinSide 2.. Functionally, part of the Sec protein translocase complex. Interacts with the SecYEG preprotein conducting channel. Has a central role in coupling the hydrolysis of ATP to the transfer of proteins into and across the cell membrane, serving both as a receptor for the preprotein-SecB complex and as an ATP-driven molecular motor driving the stepwise translocation of polypeptide chains across the membrane. This is Protein translocase subunit SecA from Brucella melitensis biotype 1 (strain ATCC 23456 / CCUG 17765 / NCTC 10094 / 16M).